Consider the following 673-residue polypeptide: DNA ligase (673 aa).

NAD(+)-binding positions include 36 to 40 (DSEYD), 85 to 86 (SL), and E118. K120 acts as the N6-AMP-lysine intermediate in catalysis. 4 residues coordinate NAD(+): R141, E178, K295, and K319. Zn(2+) contacts are provided by C413, C416, C431, and C437. In terms of domain architecture, BRCT spans 596–673 (VRDNPLKGKT…SENEFLALLA (78 aa)).

Belongs to the NAD-dependent DNA ligase family. LigA subfamily. Mg(2+) serves as cofactor. Requires Mn(2+) as cofactor.

The catalysed reaction is NAD(+) + (deoxyribonucleotide)n-3'-hydroxyl + 5'-phospho-(deoxyribonucleotide)m = (deoxyribonucleotide)n+m + AMP + beta-nicotinamide D-nucleotide.. DNA ligase that catalyzes the formation of phosphodiester linkages between 5'-phosphoryl and 3'-hydroxyl groups in double-stranded DNA using NAD as a coenzyme and as the energy source for the reaction. It is essential for DNA replication and repair of damaged DNA. This Histophilus somni (strain 129Pt) (Haemophilus somnus) protein is DNA ligase.